A 401-amino-acid polypeptide reads, in one-letter code: MWTGQPASGPPFDHENHSASCTQHFALFSSPSPANSEPKSMLSAWAHRLCVRAVDVLFGTFLYVPLGILFLKKSLSGFGDGDWDSSQIPDLHGKVAVVTGGNAGIGYHTVRQLAAKGAKVYLAARSESRAKEAIKRLREENPDIPQEKLVWLPLDLSSQAQVVDAARDLMSKTERLDILVNNAGVDPYNYVKTADGFEMTMAVNHIGHWTLTYCLLPLLKATAAQQGSDVRVITLSSSGERNHSANNHFTTLKDLDDPCAGPGWEDSRLAQGKRYGTSKLANILFATELQRRMDEEGAGILSLSLNPGTIRTEGAADVMPLVTQPLVWLLFTDAAKGADTTMFAATAREVRENSEQWKGRYLDGPGRIKPPSPKARDAVAARNLWNITAAAVKGTGALEKL.

Asparagine 16 is a glycosylation site (N-linked (GlcNAc...) asparagine). Residues valine 51–leucine 71 form a helical membrane-spanning segment. NAD(+) contacts are provided by residues lysine 72 to aspartate 80, threonine 99 to glycine 100, and alanine 118 to valine 120. A glycan (N-linked (GlcNAc...) asparagine) is linked at asparagine 242. Residue tyrosine 275 is the Proton acceptor of the active site. NAD(+) contacts are provided by residues tyrosine 275–lysine 279 and glycine 308–isoleucine 310. Asparagine 386 carries N-linked (GlcNAc...) asparagine glycosylation.

The protein resides in the membrane. The protein operates within secondary metabolite biosynthesis; terpenoid biosynthesis. Functionally, short chain dehydrogenase/reductase; part of the gene cluster that mediates the biosynthesis of the diterpenoid pyrones higginsianins A and B. The first step of the pathway is the synthesis of the alpha-pyrone moiety by the polyketide synthase dpchA via condensation of one acetyl-CoA starter unit with 3 malonyl-CoA units and 2 methylations. The alpha-pyrone is then combined with geranylgeranyl pyrophosphate (GGPP) formed by the GGPP synthase dpchD through the action of the prenyltransferase dpchC to yield a linear alpha-pyrone diterpenoid. Subsequent steps in the diterpenoid pyrone biosynthetic pathway involve the decalin core formation, which is initiated by the epoxidation of the C10-C11 olefin by the FAD-dependent oxidoreductase dpchE, and is followed by a cyclization cascade catalyzed by the terpene cyclase dpchB. The short chain dehydrogenase/reductase dpchG then oxidizes the 8S hydroxy group to a ketone and the short chain dehydrogenase/reductase dpchH reduces the ketone to the 8R hydroxy group to yield higginsianin B. Finally, the FAD-dependent oxidoreductase dpchF converts higginsianin B into higginsianin A. The chain is Short chain dehydrogenase/reductase dpchH from Colletotrichum higginsianum (strain IMI 349063) (Crucifer anthracnose fungus).